The chain runs to 447 residues: Maltoporin (447 aa).

A signal peptide spans 1–26; the sequence is MELRMKKVSVIAAAVAATLAAGSAFA.

The protein belongs to the porin LamB (TC 1.B.3) family. Homotrimer formed of three 18-stranded antiparallel beta-barrels, containing three independent channels.

It localises to the cell outer membrane. The catalysed reaction is beta-maltose(in) = beta-maltose(out). Its function is as follows. Involved in the transport of maltose and maltodextrins. The protein is Maltoporin of Vibrio campbellii (strain ATCC BAA-1116).